We begin with the raw amino-acid sequence, 537 residues long: MQETGVHNGAHGADKFGLKNLKGIYWNFGAPQLYEHALRNGEAVLSADGALVADTGVFTGRSPKDKFTVRDATTETTMWWGGNQSITAEQFETLYQDFIKHAEGMTLFAQDLYGGADPSFQIKTRVFTELAWHSLFIRTLLRRPDRADLAAFVPELTLIDLPSFRADPKRHGCRSENVVAIDFARKIVLIGGTQYAGEMKKSVFTTLNYYLPERGVLPMHCSANVGPAGDTAIFFGLSGTGKTTLSADPNRTLIGDDEHGWGKDGVFNFEGGCYAKCIKLSPEAEPEIFAASSRFGAVLENVVLDEITRKPDFDNGSKTENTRSAYPLESIPNASPTGRAGQPKNVVMLAADAFGVMPPIAKLTPAQAMYHFLSGYTAKVAGTERGVTEPTPEFSTCFGSPFLPRDPSVYGNMLRDLIHNHNVDCWLVNTGWTGGKYGTGHRMPIKVTRALLTAALDGSLRNAEFRTDPYFGFAVPTALPGVPSDILEPAKTWADKAEFDKTARALVGMFQKNFAKFEAQVDADVRAAAPDVKIAAE.

Arg61, Tyr195, and Lys201 together coordinate substrate. Residues Lys201, His220, and 236–244 contribute to the ATP site; that span reads GLSGTGKTT. 2 residues coordinate Mn(2+): Lys201 and His220. Residue Asp257 coordinates Mn(2+). Glu285 serves as a coordination point for ATP. A compositionally biased stretch (basic and acidic residues) spans 311-321; that stretch reads PDFDNGSKTEN. Positions 311–342 are disordered; sequence PDFDNGSKTENTRSAYPLESIPNASPTGRAGQ. Arg323 contributes to the substrate binding site. ATP contacts are provided by Arg323 and Thr448.

The protein belongs to the phosphoenolpyruvate carboxykinase (ATP) family. It depends on Mn(2+) as a cofactor.

Its subcellular location is the cytoplasm. The enzyme catalyses oxaloacetate + ATP = phosphoenolpyruvate + ADP + CO2. Its pathway is carbohydrate biosynthesis; gluconeogenesis. Its function is as follows. Involved in the gluconeogenesis. Catalyzes the conversion of oxaloacetate (OAA) to phosphoenolpyruvate (PEP) through direct phosphoryl transfer between the nucleoside triphosphate and OAA. The chain is Phosphoenolpyruvate carboxykinase (ATP) from Rhodopseudomonas palustris (strain BisB5).